Consider the following 635-residue polypeptide: Threonine--tRNA ligase (635 aa).

The tract at residues 1-152 (MQLLLIHSDY…AKAAVKPEAA (152 aa)) is editing domain. Residues 215–514 (PHVELMRRLE…TEEGKVPMLP (300 aa)) are catalytic. Residues C307, H359, and H483 each coordinate Zn(2+).

This sequence belongs to the class-II aminoacyl-tRNA synthetase family. Homodimer. Zn(2+) serves as cofactor.

The protein resides in the cytoplasm. It catalyses the reaction tRNA(Thr) + L-threonine + ATP = L-threonyl-tRNA(Thr) + AMP + diphosphate + H(+). Catalyzes the attachment of threonine to tRNA(Thr) in a two-step reaction: L-threonine is first activated by ATP to form Thr-AMP and then transferred to the acceptor end of tRNA(Thr). Also edits incorrectly charged L-seryl-tRNA(Thr). The polypeptide is Threonine--tRNA ligase (Methanosarcina acetivorans (strain ATCC 35395 / DSM 2834 / JCM 12185 / C2A)).